Consider the following 259-residue polypeptide: Thiazole synthase (259 aa).

K99 (schiff-base intermediate with DXP) is an active-site residue. 1-deoxy-D-xylulose 5-phosphate is bound by residues G161, 187-188 (AG), and 209-210 (NT).

It belongs to the ThiG family. In terms of assembly, homotetramer. Forms heterodimers with either ThiH or ThiS.

Its subcellular location is the cytoplasm. It catalyses the reaction [ThiS sulfur-carrier protein]-C-terminal-Gly-aminoethanethioate + 2-iminoacetate + 1-deoxy-D-xylulose 5-phosphate = [ThiS sulfur-carrier protein]-C-terminal Gly-Gly + 2-[(2R,5Z)-2-carboxy-4-methylthiazol-5(2H)-ylidene]ethyl phosphate + 2 H2O + H(+). It participates in cofactor biosynthesis; thiamine diphosphate biosynthesis. Functionally, catalyzes the rearrangement of 1-deoxy-D-xylulose 5-phosphate (DXP) to produce the thiazole phosphate moiety of thiamine. Sulfur is provided by the thiocarboxylate moiety of the carrier protein ThiS. In vitro, sulfur can be provided by H(2)S. The protein is Thiazole synthase of Nautilia profundicola (strain ATCC BAA-1463 / DSM 18972 / AmH).